The chain runs to 332 residues: MTEMTKPFLIVIVGPTASGKTELSIEVAKKFNGEIISGDSMQVYQGMDIGTAKVTTEEMEGIPHYMIDILPPDASFSAYEFKKRAEKYIKDITRRGKVPIIAGGTGLYIQSLLYNYAFEDESISEDKMKQVKLKLKELEHLNNNKLHEYLASFDKESAKDIHPNNRKRVLRAIEYYLKTKKLLSSRKKVQQFTENYDTLLIGIEMSRETLYLRINKRVDIMLGHGLFNEVQHLVEQGFEASQSMQAIGYKELVPVIKGNISMENAVEKLKQHSRQYAKRQLTWFKNKMNVHWLNKERMSLQMMLDEITTQINKRSSNHDCKRKHPRPSTREL.

Residue 14–21 (GPTASGKT) participates in ATP binding. Substrate is bound at residue 16-21 (TASGKT). Residues 39-42 (DSMQ) are interaction with substrate tRNA. Residues 312–332 (NKRSSNHDCKRKHPRPSTREL) form a disordered region. Basic residues predominate over residues 320–332 (CKRKHPRPSTREL).

Belongs to the IPP transferase family. Monomer. Requires Mg(2+) as cofactor.

It catalyses the reaction adenosine(37) in tRNA + dimethylallyl diphosphate = N(6)-dimethylallyladenosine(37) in tRNA + diphosphate. In terms of biological role, catalyzes the transfer of a dimethylallyl group onto the adenine at position 37 in tRNAs that read codons beginning with uridine, leading to the formation of N6-(dimethylallyl)adenosine (i(6)A). The chain is tRNA dimethylallyltransferase from Staphylococcus epidermidis (strain ATCC 35984 / DSM 28319 / BCRC 17069 / CCUG 31568 / BM 3577 / RP62A).